Consider the following 261-residue polypeptide: Imidazole glycerol phosphate synthase subunit HisF (261 aa).

Active-site residues include Asp16 and Asp135.

This sequence belongs to the HisA/HisF family. Heterodimer of HisH and HisF.

It is found in the cytoplasm. It carries out the reaction 5-[(5-phospho-1-deoxy-D-ribulos-1-ylimino)methylamino]-1-(5-phospho-beta-D-ribosyl)imidazole-4-carboxamide + L-glutamine = D-erythro-1-(imidazol-4-yl)glycerol 3-phosphate + 5-amino-1-(5-phospho-beta-D-ribosyl)imidazole-4-carboxamide + L-glutamate + H(+). It functions in the pathway amino-acid biosynthesis; L-histidine biosynthesis; L-histidine from 5-phospho-alpha-D-ribose 1-diphosphate: step 5/9. Functionally, IGPS catalyzes the conversion of PRFAR and glutamine to IGP, AICAR and glutamate. The HisF subunit catalyzes the cyclization activity that produces IGP and AICAR from PRFAR using the ammonia provided by the HisH subunit. The chain is Imidazole glycerol phosphate synthase subunit HisF from Mycobacterium marinum (strain ATCC BAA-535 / M).